Reading from the N-terminus, the 412-residue chain is Sulfhydrogenase 2 subunit alpha (412 aa).

Residues C60, C63, C402, and C405 each contribute to the Ni(2+) site. C63 serves as a coordination point for Fe cation. C405 contacts Fe cation.

The protein belongs to the [NiFe]/[NiFeSe] hydrogenase large subunit family. Dimer of heterotetramer of alpha, beta, gamma and delta subunits. The nickel-containing alpha and delta subunits constitute the hydrogenase activity. The beta and gamma subunits (flavin-containing dimer) constitute the sulfur reductase activity. The cofactor is Ni(2+). Requires Fe cation as cofactor.

The protein resides in the cytoplasm. It carries out the reaction H2 + NADP(+) = NADPH + H(+). The catalysed reaction is H2 + NAD(+) = NADH + H(+). Its function is as follows. Part of a bifunctional enzyme complex that functions as a hydrogen-evolving hydrogenase with sulfur-reducing activity. May play a role in hydrogen cycling during fermentative growth. Activity exhibited with NAD in addition to NADPH. The alpha and delta subunits form the hydrogenase component that catalyzes the reduction of protons to evolve hydrogen. The chain is Sulfhydrogenase 2 subunit alpha from Pyrococcus furiosus (strain ATCC 43587 / DSM 3638 / JCM 8422 / Vc1).